The chain runs to 245 residues: Transcriptional activator protein ExpR (245 aa).

The region spanning 173–238 (RSNDKDIFSQ…HAIRLGIELQ (66 aa)) is the HTH luxR-type domain. A DNA-binding region (H-T-H motif) is located at residues 197 to 216 (YQEIALILDIKTGTVKFHIG).

Belongs to the autoinducer-regulated transcriptional regulatory protein family.

In terms of biological role, functions as an OHLL responsive transcriptional regulator that acts in virulence (soft rot disease) through the activation of genes for plant tissue macerating enzymes. In Pectobacterium parmentieri, this protein is Transcriptional activator protein ExpR (expR).